A 94-amino-acid chain; its full sequence is MFTINAEVRKEQGKGASRRLRRANKFPAIVYGGNQELVSIELDHDQVINMEQKAEFYSDVLTLVIDGKETKVKVQAVQRHPFKPKLAHIDFLRA.

This sequence belongs to the bacterial ribosomal protein bL25 family. Part of the 50S ribosomal subunit; part of the 5S rRNA/L5/L18/L25 subcomplex. Contacts the 5S rRNA. Binds to the 5S rRNA independently of L5 and L18.

Its function is as follows. This is one of the proteins that binds to the 5S RNA in the ribosome where it forms part of the central protuberance. This Photorhabdus laumondii subsp. laumondii (strain DSM 15139 / CIP 105565 / TT01) (Photorhabdus luminescens subsp. laumondii) protein is Large ribosomal subunit protein bL25.